The primary structure comprises 233 residues: Esterase FUS5 (233 aa).

Catalysis depends on charge relay system residues serine 105, aspartate 159, and histidine 187.

This sequence belongs to the LovG family.

Its function is as follows. Esterase; part of the gene cluster that mediates the biosynthesis of the mycotoxin fusarin C. Within the cluster, FUS1, FUS2, FUS8 and FUS9 are sufficient for fusarin production. The other FUS cluster members are not essential for fusarin C biosynthesis. In Gibberella fujikuroi (strain CBS 195.34 / IMI 58289 / NRRL A-6831) (Bakanae and foot rot disease fungus), this protein is Esterase FUS5.